The following is a 268-amino-acid chain: Type III pantothenate kinase (268 aa).

D6–V13 contributes to the ATP binding site. Residues Y100 and G107–R110 each bind substrate. Residue D109 is the Proton acceptor of the active site. A K(+)-binding site is contributed by D129. T132 lines the ATP pocket. Position 184 (T184) interacts with substrate.

The protein belongs to the type III pantothenate kinase family. Homodimer. It depends on NH4(+) as a cofactor. The cofactor is K(+).

It localises to the cytoplasm. The enzyme catalyses (R)-pantothenate + ATP = (R)-4'-phosphopantothenate + ADP + H(+). Its pathway is cofactor biosynthesis; coenzyme A biosynthesis; CoA from (R)-pantothenate: step 1/5. Functionally, catalyzes the phosphorylation of pantothenate (Pan), the first step in CoA biosynthesis. This Alkaliphilus metalliredigens (strain QYMF) protein is Type III pantothenate kinase.